Consider the following 223-residue polypeptide: Killer cell lectin-like receptor subfamily B member 1B allele B (223 aa).

Over 1 to 45 (MDTAVVYADLHLARTGEPKHKSPPSLSPDTCQCPRWHRLALKLGC) the chain is Cytoplasmic. Residues 5-10 (VVYADL) carry the ITIM motif motif. Residues 31 to 34 (CQCP) carry the LCK-binding motif motif. Residues 46–66 (ACLILLVLSVIGLGVLVLTLL) form a helical; Signal-anchor for type II membrane protein membrane-spanning segment. Residues 67–223 (QKPLIQNSPA…LKCECMCNGS (157 aa)) lie on the Extracellular side of the membrane. The 111-residue stretch at 101–211 (HQDKCFHVSQ…CDSDNLWICQ (111 aa)) folds into the C-type lectin domain. 2 cysteine pairs are disulfide-bonded: C122/C210 and C189/C202.

In terms of assembly, homodimer; disulfide-linked. Interacts with tyrosine kinase LCK. Binds PTPN6/SHP-1 in a phosphorylation-dependent manner. In terms of tissue distribution, expressed in a subset of natural killer cells.

The protein resides in the membrane. In terms of biological role, receptor for CLEC2D/OCIL. Ligand-binding contributes to inhibition of cytotoxic natural killer (NK) cells. May mediate MHC class I-independent 'missing-self' recognition of allografts, tumor cells and virus-infected cells. In Rattus norvegicus (Rat), this protein is Killer cell lectin-like receptor subfamily B member 1B allele B.